We begin with the raw amino-acid sequence, 200 residues long: Probable GTP-binding protein EngB (200 aa).

The EngB-type G domain occupies 22–195 (GKDEIAFVGR…INNICSGINY (174 aa)). GTP-binding positions include 30–37 (GRSNVGKS), 57–61 (GKTRL), 75–78 (DLPG), 142–145 (TKSD), and 174–176 (FSS). Residues Ser37 and Thr59 each coordinate Mg(2+).

It belongs to the TRAFAC class TrmE-Era-EngA-EngB-Septin-like GTPase superfamily. EngB GTPase family. Mg(2+) is required as a cofactor.

Its function is as follows. Necessary for normal cell division and for the maintenance of normal septation. The protein is Probable GTP-binding protein EngB of Clostridium acetobutylicum (strain ATCC 824 / DSM 792 / JCM 1419 / IAM 19013 / LMG 5710 / NBRC 13948 / NRRL B-527 / VKM B-1787 / 2291 / W).